We begin with the raw amino-acid sequence, 179 residues long: ATP synthase subunit b, chloroplastic (179 aa).

The helical transmembrane segment at isoleucine 35–serine 51 threads the bilayer.

It belongs to the ATPase B chain family. In terms of assembly, F-type ATPases have 2 components, F(1) - the catalytic core - and F(0) - the membrane proton channel. F(1) has five subunits: alpha(3), beta(3), gamma(1), delta(1), epsilon(1). F(0) has four main subunits: a(1), b(1), b'(1) and c(10-14). The alpha and beta chains form an alternating ring which encloses part of the gamma chain. F(1) is attached to F(0) by a central stalk formed by the gamma and epsilon chains, while a peripheral stalk is formed by the delta, b and b' chains.

It is found in the plastid. The protein resides in the chloroplast thylakoid membrane. Functionally, f(1)F(0) ATP synthase produces ATP from ADP in the presence of a proton or sodium gradient. F-type ATPases consist of two structural domains, F(1) containing the extramembraneous catalytic core and F(0) containing the membrane proton channel, linked together by a central stalk and a peripheral stalk. During catalysis, ATP synthesis in the catalytic domain of F(1) is coupled via a rotary mechanism of the central stalk subunits to proton translocation. In terms of biological role, component of the F(0) channel, it forms part of the peripheral stalk, linking F(1) to F(0). In Emiliania huxleyi (Coccolithophore), this protein is ATP synthase subunit b, chloroplastic.